The following is a 451-amino-acid chain: tRNA-2-methylthio-N(6)-dimethylallyladenosine synthase (451 aa).

The MTTase N-terminal domain occupies 6 to 122; sequence RRYHIITFGC…LDQLLEQVWA (117 aa). [4Fe-4S] cluster is bound by residues C15, C51, C85, C157, C161, and C164. In terms of domain architecture, Radical SAM core spans 143-384; sequence RESTVSAWVN…STQAMERSQR (242 aa). Residues 383 to 447 form the TRAM domain; it reads QRYLGRVEEV…AFSLTGEALS (65 aa).

This sequence belongs to the methylthiotransferase family. MiaB subfamily. As to quaternary structure, monomer. It depends on [4Fe-4S] cluster as a cofactor.

It localises to the cytoplasm. It catalyses the reaction N(6)-dimethylallyladenosine(37) in tRNA + (sulfur carrier)-SH + AH2 + 2 S-adenosyl-L-methionine = 2-methylsulfanyl-N(6)-dimethylallyladenosine(37) in tRNA + (sulfur carrier)-H + 5'-deoxyadenosine + L-methionine + A + S-adenosyl-L-homocysteine + 2 H(+). Catalyzes the methylthiolation of N6-(dimethylallyl)adenosine (i(6)A), leading to the formation of 2-methylthio-N6-(dimethylallyl)adenosine (ms(2)i(6)A) at position 37 in tRNAs that read codons beginning with uridine. The sequence is that of tRNA-2-methylthio-N(6)-dimethylallyladenosine synthase from Synechocystis sp. (strain ATCC 27184 / PCC 6803 / Kazusa).